A 241-amino-acid polypeptide reads, in one-letter code: Aquaporin Z 1 (241 aa).

Residues 23-43 (AVFAAAFPELGIGFLGVAFAF) traverse the membrane as a helical segment. The NPA 1 motif lies at 63–65 (NPA). The next 3 membrane-spanning stretches (helical) occupy residues 85–105 (IVAQ…ILTG), 129–149 (LLSA…VILG), and 156–176 (PVGF…LISI). The NPA 2 motif lies at 184-186 (NPA). A helical transmembrane segment spans residues 204-224 (WLFWLAPILGGAIGAVVWKIF).

It belongs to the MIP/aquaporin (TC 1.A.8) family. As to quaternary structure, homotetramer.

Its subcellular location is the cell inner membrane. The enzyme catalyses H2O(in) = H2O(out). Functionally, channel that permits osmotically driven movement of water in both directions. It is involved in the osmoregulation and in the maintenance of cell turgor during volume expansion in rapidly growing cells. It mediates rapid entry or exit of water in response to abrupt changes in osmolarity. This Agrobacterium fabrum (strain C58 / ATCC 33970) (Agrobacterium tumefaciens (strain C58)) protein is Aquaporin Z 1.